A 444-amino-acid polypeptide reads, in one-letter code: Aflatoxin biosynthesis regulatory protein (444 aa).

A disordered region spans residues 1-25 (MVDHISPRASPGPIRSSQTRRARKL). The segment at residues 29–56 (CTSCASSKVRCTKEKPACARCIERGLAC) is a DNA-binding region (zn(2)-C6 fungal-type). The disordered stretch occupies residues 64–174 (MGRNPRAPSP…AGQEQSTLSS (111 aa)). A compositionally biased stretch (basic residues) spans 106-116 (TQAHTHAHSHP). Over residues 120–130 (PQSHPQSNQPP) the composition is skewed to low complexity. The segment covering 136–149 (PNGSSSVSAIFSHQ) has biased composition (polar residues).

In terms of assembly, interacts with aflS.

The protein localises to the nucleus. Its function is as follows. Transcription factor; part of the gene cluster that mediates the biosynthesis of aflatoxin, a polyketide-derived furanocoumarin which is part of the most toxic and carcinogenic compounds among the known mycotoxins. Binds to at least 17 genes in the aflatoxin biosynthetic cluster, leading to the activation of an enzymatic cascade reaction that results in aflatoxin biosynthesis. Promoter regions of several biosynthesis genes are bound by aflR in a dimeric form with a 5'-TCG(N5)CGA-3' binding motif. AflR also recognizes 5'-TTAGGCCTAA-3' and 5'-TCGCAGCCCGG-3' binding sequences. AflR achieves its binding specificity through a mechanism in which either two copies of aflR or its complex with aflS bind to target sites on DNA in a highly cooperative manner. AflS acts as a modulator of aflR's DNA-binding by decreasing its DNA-binding affinity. In addition to aflatoxin biosynthesis, also plays a positive role in the fungal growth, spore germination, sclerotial development, and carbohydrate metabolism. This chain is Aflatoxin biosynthesis regulatory protein, found in Aspergillus flavus (strain ATCC 200026 / FGSC A1120 / IAM 13836 / NRRL 3357 / JCM 12722 / SRRC 167).